Here is a 406-residue protein sequence, read N- to C-terminus: Probable endo-xylogalacturonan hydrolase A (406 aa).

The N-terminal stretch at 1–18 is a signal peptide; it reads MISLNSIFLLSLVGLSRA. Residues 20-49 form a disordered region; sequence PSRSETSPDRTIKPRAACTPTAGGSSSTDD. PbH1 repeat units follow at residues 183 to 213, 214 to 235, 237 to 257, 266 to 289, 299 to 320, and 368 to 390; these read TSNA…DIGA, STYV…AFKP, ANYV…SVGS, VQNV…KTYP, VKNA…QIQS, and TCDV…ILCG. Residue aspartate 228 is the Proton donor of the active site. A glycan (N-linked (GlcNAc...) asparagine) is linked at asparagine 244. Residue histidine 251 is part of the active site. N-linked (GlcNAc...) asparagine glycosylation is found at asparagine 273, asparagine 278, and asparagine 301.

The protein belongs to the glycosyl hydrolase 28 family.

The protein localises to the secreted. Its function is as follows. Pectinolytic enzyme involved in the degradation of xylogalacturonan (xga), a galacturonan backbone heavily substituted with xylose, and which is one important component of the hairy regions of pectin. Activity requires a galacturonic acid backbone substituted with xylose. The sequence is that of Probable endo-xylogalacturonan hydrolase A (xghA) from Aspergillus flavus (strain ATCC 200026 / FGSC A1120 / IAM 13836 / NRRL 3357 / JCM 12722 / SRRC 167).